Here is a 341-residue protein sequence, read N- to C-terminus: Alanine racemase (341 aa).

Catalysis depends on Lys-33, which acts as the Proton acceptor; specific for D-alanine. Lys-33 carries the N6-(pyridoxal phosphate)lysine modification. Arg-126 is a binding site for substrate. The active-site Proton acceptor; specific for L-alanine is the Tyr-236. Met-284 contributes to the substrate binding site.

Belongs to the alanine racemase family. Pyridoxal 5'-phosphate serves as cofactor.

The catalysed reaction is L-alanine = D-alanine. It functions in the pathway amino-acid biosynthesis; D-alanine biosynthesis; D-alanine from L-alanine: step 1/1. Functionally, catalyzes the interconversion of L-alanine and D-alanine. In Aquifex pyrophilus, this protein is Alanine racemase (alr).